The primary structure comprises 204 residues: Pyridoxamine 5'-phosphate oxidase YLR456W homolog (204 aa).

Residues 65–66 and N127 contribute to the FMN site; that span reads FT.

This sequence belongs to the pyridoxamine 5'-phosphate oxidase family. FMN is required as a cofactor.

It is found in the cytoplasm. It localises to the nucleus. The polypeptide is Pyridoxamine 5'-phosphate oxidase YLR456W homolog (Saccharomyces cerevisiae (strain ATCC 204508 / S288c) (Baker's yeast)).